Here is an 82-residue protein sequence, read N- to C-terminus: MTDSSFSVPKPKPLKKGSLVLVNREAYESSLEALASDALPPQYIFEGPGEILMVKGDYAQVRWRRPVPDVWLRIDQLKAWAE.

The protein belongs to the complex I NdhO subunit family. In terms of assembly, NDH-1 can be composed of about 15 different subunits; different subcomplexes with different compositions have been identified which probably have different functions.

It localises to the cellular thylakoid membrane. The catalysed reaction is a plastoquinone + NADH + (n+1) H(+)(in) = a plastoquinol + NAD(+) + n H(+)(out). It carries out the reaction a plastoquinone + NADPH + (n+1) H(+)(in) = a plastoquinol + NADP(+) + n H(+)(out). NDH-1 shuttles electrons from an unknown electron donor, via FMN and iron-sulfur (Fe-S) centers, to quinones in the respiratory and/or the photosynthetic chain. The immediate electron acceptor for the enzyme in this species is believed to be plastoquinone. Couples the redox reaction to proton translocation, and thus conserves the redox energy in a proton gradient. Cyanobacterial NDH-1 also plays a role in inorganic carbon-concentration. The chain is NAD(P)H-quinone oxidoreductase subunit O from Prochlorococcus marinus (strain MIT 9211).